The sequence spans 250 residues: 3-deoxy-manno-octulosonate cytidylyltransferase (250 aa).

The protein belongs to the KdsB family.

It localises to the cytoplasm. It catalyses the reaction 3-deoxy-alpha-D-manno-oct-2-ulosonate + CTP = CMP-3-deoxy-beta-D-manno-octulosonate + diphosphate. Its pathway is nucleotide-sugar biosynthesis; CMP-3-deoxy-D-manno-octulosonate biosynthesis; CMP-3-deoxy-D-manno-octulosonate from 3-deoxy-D-manno-octulosonate and CTP: step 1/1. It functions in the pathway bacterial outer membrane biogenesis; lipopolysaccharide biosynthesis. Functionally, activates KDO (a required 8-carbon sugar) for incorporation into bacterial lipopolysaccharide in Gram-negative bacteria. The chain is 3-deoxy-manno-octulosonate cytidylyltransferase from Francisella tularensis subsp. novicida (strain U112).